The chain runs to 427 residues: ATP-dependent RNA helicase DDX39A (427 aa).

Positions methionine 1–proline 19 are enriched in acidic residues. Residues methionine 1–lysine 35 are disordered. Alanine 2 carries the N-acetylalanine modification. Lysine 31 is covalently cross-linked (Glycyl lysine isopeptide (Lys-Gly) (interchain with G-Cter in SUMO2)). N6-acetyllysine; alternate is present on lysine 35. Lysine 35 is covalently cross-linked (Glycyl lysine isopeptide (Lys-Gly) (interchain with G-Cter in SUMO2); alternate). A Phosphoserine modification is found at serine 37. The Q motif motif lies at serine 44–histidine 72. The 174-residue stretch at isoleucine 75–valine 248 folds into the Helicase ATP-binding domain. Alanine 88–threonine 95 lines the ATP pocket. Glycyl lysine isopeptide (Lys-Gly) (interchain with G-Cter in SUMO2) cross-links involve residues lysine 154 and lysine 162. Threonine 171 carries the post-translational modification Phosphothreonine. Residues aspartate 195–aspartate 198 carry the DECD box motif. Glycyl lysine isopeptide (Lys-Gly) (interchain with G-Cter in SUMO2) cross-links involve residues lysine 240 and lysine 255. The 162-residue stretch at glycine 260–threonine 421 folds into the Helicase C-terminal domain. Serine 426 bears the Phosphoserine mark.

It belongs to the DEAD box helicase family. DECD subfamily. Binds ALYREF/THOC4 and DDX39B/BAT1. Interacts with the apo-AREX complex component SARNP. Interacts with MX1. Interacts with MCM3AP isoform GANP. Interacts with ECD. Interacts with PHAX; this interaction stimulates PHAX RNA binding activity. Post-translationally, SUMOylated by RANBP2; SUMOylation modification affects its ability to bind RNA.

It is found in the nucleus. The protein localises to the cytoplasm. The enzyme catalyses ATP + H2O = ADP + phosphate + H(+). In terms of biological role, helicase that plays an essential role in mRNA export and is involved in multiple steps in RNA metabolism including alternative splicing. Regulates nuclear mRNA export to the cytoplasm through association with ECD. Also involved in spliceosomal uridine-rich small nuclear RNA (U snRNA) export by stimulating the RNA binding of adapter PHAX. Plays a role in the negative regulation of type I IFN production by increasing the nuclear retention of antiviral transcripts and thus reducing their protein expression. Independently of the interferon pathway, plays an antiviral role against alphaviruses by binding to a 5' conserved sequence element in the viral genomic RNA. This is ATP-dependent RNA helicase DDX39A (Ddx39a) from Rattus norvegicus (Rat).